The following is a 409-amino-acid chain: N-acetylglucosamine-6-phosphate deacetylase (409 aa).

Glu143 serves as a coordination point for a divalent metal cation. Residue 154–155 (AH) participates in substrate binding. Residues His211 and His232 each coordinate a divalent metal cation. Substrate is bound by residues 235-236 (NA), Arg243, and 269-272 (DGTH). The Proton donor/acceptor role is filled by Asp294. 328–330 (LSG) provides a ligand contact to substrate.

It belongs to the metallo-dependent hydrolases superfamily. NagA family. It depends on a divalent metal cation as a cofactor.

The catalysed reaction is N-acetyl-D-glucosamine 6-phosphate + H2O = D-glucosamine 6-phosphate + acetate. The protein operates within amino-sugar metabolism; N-acetylneuraminate degradation. Hydrolyzes the N-glycolyl group from N-glycolylglucosamine 6-phosphate (GlcNGc-6-P) in the N-glycolylneuraminic acid (Neu5Gc) degradation pathway. Although human is not able to catalyze formation of Neu5Gc due to the inactive CMAHP enzyme, Neu5Gc is present in food and must be degraded. This Homo sapiens (Human) protein is N-acetylglucosamine-6-phosphate deacetylase (AMDHD2).